A 174-amino-acid polypeptide reads, in one-letter code: Small ribosomal subunit protein uS5 (174 aa).

In terms of domain architecture, S5 DRBM spans 16–79; sequence FSELIVSVRR…NAARKNMIRV (64 aa).

It belongs to the universal ribosomal protein uS5 family. As to quaternary structure, part of the 30S ribosomal subunit. Contacts proteins S4 and S8.

In terms of biological role, with S4 and S12 plays an important role in translational accuracy. Functionally, located at the back of the 30S subunit body where it stabilizes the conformation of the head with respect to the body. The protein is Small ribosomal subunit protein uS5 of Ehrlichia ruminantium (strain Gardel).